We begin with the raw amino-acid sequence, 134 residues long: Transmembrane protein 100 (134 aa).

2 helical membrane passes run 56–76 and 84–104; these read CIIPFAVVVFIAGIVVTAVAY and IISIFGLVVLSSGLFLLASSA. Phosphoserine is present on S121.

As to quaternary structure, interacts (via C-terminus) with TRPA1 and TRPV1. Interacts with TASOR. Expressed in neurons of the myenteric and submucosal plexuses in the gastric body, jejunum and proximal colon. Expressed in arterial endothelial cells and neurons of the central nervous system and peripheral nervous system. Expressed in umbilical artery endothelial cells (at protein level).

The protein resides in the cell membrane. The protein localises to the membrane. It is found in the perikaryon. Its subcellular location is the cytoplasm. It localises to the perinuclear region. The protein resides in the endoplasmic reticulum. Its function is as follows. Plays a role during embryonic arterial endothelium differentiation and vascular morphogenesis through the ACVRL1 receptor-dependent signaling pathway upon stimulation by bone morphogenetic proteins, such as GDF2/BMP9 and BMP10. Involved in the regulation of nociception, acting as a modulator of the interaction between TRPA1 and TRPV1, two molecular sensors and mediators of pain signals in dorsal root ganglia (DRG) neurons. Mechanistically, it weakens their interaction, thereby releasing the inhibition of TRPA1 by TRPV1 and increasing the single-channel open probability of the TRPA1-TRPV1 complex. The polypeptide is Transmembrane protein 100 (TMEM100) (Homo sapiens (Human)).